Reading from the N-terminus, the 171-residue chain is Lipoprotein signal peptidase (171 aa).

The next 3 helical transmembrane spans lie at 8 to 28, 64 to 84, and 99 to 119; these read SFLWLSAVAFVIDLLTKYIVV, WQQYFFILLALAISGMLVYFL, and ALIIGGALANMVDRAYNGFVV. Active-site residues include aspartate 120 and aspartate 138. The chain crosses the membrane as a helical span at residues 133–153; that stretch reads VFNIADIAICIGAGLLVLDAF.

It belongs to the peptidase A8 family.

It localises to the cell inner membrane. The catalysed reaction is Release of signal peptides from bacterial membrane prolipoproteins. Hydrolyzes -Xaa-Yaa-Zaa-|-(S,diacylglyceryl)Cys-, in which Xaa is hydrophobic (preferably Leu), and Yaa (Ala or Ser) and Zaa (Gly or Ala) have small, neutral side chains.. It participates in protein modification; lipoprotein biosynthesis (signal peptide cleavage). This protein specifically catalyzes the removal of signal peptides from prolipoproteins. The polypeptide is Lipoprotein signal peptidase (Haemophilus influenzae (strain ATCC 51907 / DSM 11121 / KW20 / Rd)).